We begin with the raw amino-acid sequence, 292 residues long: 4-hydroxy-tetrahydrodipicolinate synthase (292 aa).

A pyruvate-binding site is contributed by threonine 45. The active-site Proton donor/acceptor is tyrosine 133. Catalysis depends on lysine 161, which acts as the Schiff-base intermediate with substrate. Isoleucine 203 is a binding site for pyruvate.

It belongs to the DapA family. As to quaternary structure, homotetramer; dimer of dimers.

It is found in the cytoplasm. It catalyses the reaction L-aspartate 4-semialdehyde + pyruvate = (2S,4S)-4-hydroxy-2,3,4,5-tetrahydrodipicolinate + H2O + H(+). It functions in the pathway amino-acid biosynthesis; L-lysine biosynthesis via DAP pathway; (S)-tetrahydrodipicolinate from L-aspartate: step 3/4. Catalyzes the condensation of (S)-aspartate-beta-semialdehyde [(S)-ASA] and pyruvate to 4-hydroxy-tetrahydrodipicolinate (HTPA). This Azoarcus sp. (strain BH72) protein is 4-hydroxy-tetrahydrodipicolinate synthase.